The following is a 254-amino-acid chain: 3-deoxy-manno-octulosonate cytidylyltransferase (254 aa).

Belongs to the KdsB family.

Its subcellular location is the cytoplasm. The catalysed reaction is 3-deoxy-alpha-D-manno-oct-2-ulosonate + CTP = CMP-3-deoxy-beta-D-manno-octulosonate + diphosphate. Its pathway is nucleotide-sugar biosynthesis; CMP-3-deoxy-D-manno-octulosonate biosynthesis; CMP-3-deoxy-D-manno-octulosonate from 3-deoxy-D-manno-octulosonate and CTP: step 1/1. It functions in the pathway bacterial outer membrane biogenesis; lipopolysaccharide biosynthesis. Activates KDO (a required 8-carbon sugar) for incorporation into bacterial lipopolysaccharide in Gram-negative bacteria. This chain is 3-deoxy-manno-octulosonate cytidylyltransferase, found in Chlamydia abortus (strain DSM 27085 / S26/3) (Chlamydophila abortus).